Consider the following 309-residue polypeptide: Methionyl-tRNA formyltransferase (309 aa).

110-113 (SLLP) provides a ligand contact to (6S)-5,6,7,8-tetrahydrofolate.

This sequence belongs to the Fmt family.

The enzyme catalyses L-methionyl-tRNA(fMet) + (6R)-10-formyltetrahydrofolate = N-formyl-L-methionyl-tRNA(fMet) + (6S)-5,6,7,8-tetrahydrofolate + H(+). Attaches a formyl group to the free amino group of methionyl-tRNA(fMet). The formyl group appears to play a dual role in the initiator identity of N-formylmethionyl-tRNA by promoting its recognition by IF2 and preventing the misappropriation of this tRNA by the elongation apparatus. In Caldanaerobacter subterraneus subsp. tengcongensis (strain DSM 15242 / JCM 11007 / NBRC 100824 / MB4) (Thermoanaerobacter tengcongensis), this protein is Methionyl-tRNA formyltransferase.